The following is a 527-amino-acid chain: Heat shock factor protein HSF8 (527 aa).

Residues 39–133 (PFLVKTYDMV…KSISRRKPAH (95 aa)) mediate DNA binding. Disordered stretches follow at residues 128–158 (RRKPAHGHAQQQQQPHGNAQQQMQPPGHSAS), 241–273 (NESNKRIAEGSKKRRIKQDIESQDPSVTPADGQ), and 297–341 (SSPR…TSGK). Residues 134–152 (GHAQQQQQPHGNAQQQMQP) are compositionally biased toward low complexity. Positions 317-326 (SPQSNASSGR) are enriched in polar residues.

It belongs to the HSF family. Homotrimer. In terms of processing, exhibits temperature-dependent phosphorylation.

The protein resides in the nucleus. Its function is as follows. DNA-binding protein that specifically binds heat shock promoter elements (HSE) and activates transcription. The chain is Heat shock factor protein HSF8 (HSF8) from Solanum lycopersicum (Tomato).